The following is a 259-amino-acid chain: Protein GrpE (259 aa).

Disordered regions lie at residues 1 to 74 and 228 to 259; these read MNSD…IKGS and PGPK…KDEN. The span at 17-40 shows a compositional bias: low complexity; it reads SSQNNPSENSVSSPNSNESVNQVE. Polar residues-rich tracts occupy residues 56–73 and 240–253; these read VDTA…NIKG and QSAS…SVDG.

This sequence belongs to the GrpE family. As to quaternary structure, homodimer.

The protein resides in the cytoplasm. Functionally, participates actively in the response to hyperosmotic and heat shock by preventing the aggregation of stress-denatured proteins, in association with DnaK and GrpE. It is the nucleotide exchange factor for DnaK and may function as a thermosensor. Unfolded proteins bind initially to DnaJ; upon interaction with the DnaJ-bound protein, DnaK hydrolyzes its bound ATP, resulting in the formation of a stable complex. GrpE releases ADP from DnaK; ATP binding to DnaK triggers the release of the substrate protein, thus completing the reaction cycle. Several rounds of ATP-dependent interactions between DnaJ, DnaK and GrpE are required for fully efficient folding. This is Protein GrpE from Prochlorococcus marinus (strain NATL2A).